The sequence spans 750 residues: Photosystem I P700 chlorophyll a apoprotein A1 (750 aa).

The next 8 helical transmembrane spans lie at 70-93 (VFSAHFGQLSIIFLWLSGMYFHGA), 156-179 (LYCTAIGALVFAALMLFAGWFHYH), 195-219 (LNHHLAGLLGLGSLSWAGHQVHVSL), 291-309 (IAHHHLAIAILFLIAGHMY), 346-369 (WHAQLSLNLAMLGSLTIVVAHHMY), 385-411 (LSLFTHHMWIGGFLIVGAAAHAAIFMV), 433-455 (AIISHLNWVCIFLGFHSFGLYIH), and 531-549 (FLVHHIHAFTIHVTVLILL). [4Fe-4S] cluster-binding residues include Cys573 and Cys582. The next 2 helical transmembrane spans lie at 589-610 (HVFLGLFWMYNAISVVIFHFSW) and 664-686 (LSAYGLFFLGAHFVWAFSLMFLF). Chlorophyll a' is bound at residue His675. Chlorophyll a is bound by residues Met683 and Tyr691. Trp692 serves as a coordination point for phylloquinone. Residues 724–744 (AVGVTHYLLGGIATTWAFFLA) traverse the membrane as a helical segment.

This sequence belongs to the PsaA/PsaB family. In terms of assembly, the PsaA/B heterodimer binds the P700 chlorophyll special pair and subsequent electron acceptors. PSI consists of a core antenna complex that captures photons, and an electron transfer chain that converts photonic excitation into a charge separation. The eukaryotic PSI reaction center is composed of at least 11 subunits. It depends on P700 is a chlorophyll a/chlorophyll a' dimer, A0 is one or more chlorophyll a, A1 is one or both phylloquinones and FX is a shared 4Fe-4S iron-sulfur center. as a cofactor.

The protein resides in the plastid. It localises to the chloroplast thylakoid membrane. It catalyses the reaction reduced [plastocyanin] + hnu + oxidized [2Fe-2S]-[ferredoxin] = oxidized [plastocyanin] + reduced [2Fe-2S]-[ferredoxin]. In terms of biological role, psaA and PsaB bind P700, the primary electron donor of photosystem I (PSI), as well as the electron acceptors A0, A1 and FX. PSI is a plastocyanin-ferredoxin oxidoreductase, converting photonic excitation into a charge separation, which transfers an electron from the donor P700 chlorophyll pair to the spectroscopically characterized acceptors A0, A1, FX, FA and FB in turn. Oxidized P700 is reduced on the lumenal side of the thylakoid membrane by plastocyanin. In Eucalyptus globulus subsp. globulus (Tasmanian blue gum), this protein is Photosystem I P700 chlorophyll a apoprotein A1.